The primary structure comprises 705 residues: MAKSKSRGRRAEKKSKKEESSLVHDSEVPVQESGENSTPSGVPNTFFGLVDSNELDYFKQAESTLNINAFDSDEDRQGFINSVLEEAQGKELKLVTNQICSKLMERLILFANNKQLKKIFKQFSNHFVSLAFHKYSSHVLETLLVRSAALIEKELAQTEEEKHEEEEEGEDEKDDVPMEDLFISMLNEFKPHLTTMIDHSYASHVLRLLLLILAGKELPSTTTSNSTLRSKKSKIARKMIEIKDNEDFNRAFQTPESFKNELREYCQTISAGLDTKSARELSIHKIGSPVLQLLVQFEGLVDRERTFWHLIFCKDSEGKDSTEESFVEYLLSDSVGSHFLESIIKNDGARPKYLERLYKLYMKDRVLKLAKRSTNGVYIIQALLFKLKPVEVEFILDEIIPELSELISIAENQNLDLANKLIDASIIRGNYRRDEIIDQLFKKFAPNYNVENPQDHTTTEFIENILQLQGSTLGNTRDDWPTAEERKRALFLEKLMEYDYKFVICTWFNFMALPIERFIQMCFHGVFCHVVEKALIVEPEESKKVQILRKRLLNIFQGQIVGLACNSYGSHIVDTLWNFTVLLPMYKDRIASELFSESHKVKESTYGRLVWKNWGMELFSRKKYDWKALIKQQEVEYYGEDNEESTTSKRVKKPIELKLERLAEEKRRKEEQAEKAQSGYIKRKLDELTGSGPEKKQKLRGRNRN.

The segment covering Met1–Lys14 has biased composition (basic residues). The interval Met1 to Pro43 is disordered. Over residues Ser15–Glu27 the composition is skewed to basic and acidic residues. Residues Ser33–Pro43 are compositionally biased toward polar residues. 8 Pumilio repeats span residues Glu86 to Lys121, Gln122 to Gln157, Glu188 to Ser224, Gly272 to Trp308, Ser321 to Lys359, Tyr361 to Asp397, Ala512 to Arg549, and Asn554 to Ser592. Over residues Glu665–Glu674 the composition is skewed to basic and acidic residues. The interval Glu665–Asn705 is disordered.

The protein belongs to the NOP9 family.

The protein localises to the nucleus. The protein resides in the nucleolus. RNA-binding nucleolar protein required for pre-rRNA processing. Involved in production of 18S rRNA and assembly of small ribosomal subunit. The sequence is that of Nucleolar protein 9 (NOP9) from Candida tropicalis (strain ATCC MYA-3404 / T1) (Yeast).